Consider the following 235-residue polypeptide: Phosphoribosylaminoimidazole-succinocarboxamide synthase (235 aa).

Belongs to the SAICAR synthetase family.

The enzyme catalyses 5-amino-1-(5-phospho-D-ribosyl)imidazole-4-carboxylate + L-aspartate + ATP = (2S)-2-[5-amino-1-(5-phospho-beta-D-ribosyl)imidazole-4-carboxamido]succinate + ADP + phosphate + 2 H(+). Its pathway is purine metabolism; IMP biosynthesis via de novo pathway; 5-amino-1-(5-phospho-D-ribosyl)imidazole-4-carboxamide from 5-amino-1-(5-phospho-D-ribosyl)imidazole-4-carboxylate: step 1/2. The polypeptide is Phosphoribosylaminoimidazole-succinocarboxamide synthase (Caldanaerobacter subterraneus subsp. tengcongensis (strain DSM 15242 / JCM 11007 / NBRC 100824 / MB4) (Thermoanaerobacter tengcongensis)).